Reading from the N-terminus, the 428-residue chain is tRNA(Ile)-lysidine synthase (428 aa).

Residue 28-33 (SGGVDS) coordinates ATP.

This sequence belongs to the tRNA(Ile)-lysidine synthase family.

The protein localises to the cytoplasm. The enzyme catalyses cytidine(34) in tRNA(Ile2) + L-lysine + ATP = lysidine(34) in tRNA(Ile2) + AMP + diphosphate + H(+). Ligates lysine onto the cytidine present at position 34 of the AUA codon-specific tRNA(Ile) that contains the anticodon CAU, in an ATP-dependent manner. Cytidine is converted to lysidine, thus changing the amino acid specificity of the tRNA from methionine to isoleucine. The sequence is that of tRNA(Ile)-lysidine synthase from Streptococcus pyogenes serotype M18 (strain MGAS8232).